A 318-amino-acid chain; its full sequence is UDP-N-acetylenolpyruvoylglucosamine reductase (318 aa).

One can recognise an FAD-binding PCMH-type domain in the interval 38 to 204 (IGGICPVVVE…LGIEILLKEG (167 aa)). Arg-182 is a catalytic residue. The interval 212–232 (SLKDKRDRRNSSQPENKKSAG) is disordered. Basic and acidic residues predominate over residues 213-229 (LKDKRDRRNSSQPENKK). The active-site Proton donor is the Ser-233. The active site involves Glu-310.

Belongs to the MurB family. It depends on FAD as a cofactor.

The protein localises to the cytoplasm. It catalyses the reaction UDP-N-acetyl-alpha-D-muramate + NADP(+) = UDP-N-acetyl-3-O-(1-carboxyvinyl)-alpha-D-glucosamine + NADPH + H(+). It functions in the pathway cell wall biogenesis; peptidoglycan biosynthesis. Its function is as follows. Cell wall formation. In Leptospira borgpetersenii serovar Hardjo-bovis (strain L550), this protein is UDP-N-acetylenolpyruvoylglucosamine reductase.